We begin with the raw amino-acid sequence, 431 residues long: MNSISITPGSSLKGELVVPGDKSISHRSIMLGAIANGVTTVRGFLRGEDNMATMAAFRAMGVRIDDDGHLLSIHGRGLHGLEEPGDVLDCGNSGTSMRLLTGLLAGQNFFSVLSGDQYLRKRPMKRVVEPLSRMGARILGRAGGNLAPLAISGGTLNAIGYESPVSSAQIKSAIMLAGLYADGDTSVREPSLSRDHSERMFALFGASLETFHNGVTVKGGIELHAQEIHVPGDISSAAFFIVAALITPDSELLIRNVGVNPTRTGIIDVLRSMGGSIELVDEREVSAEPVADILVRSSRLKGVRIEGQTVPRAIDEFPAICVAAACAEGTTSIRDARELRVKETDRISAMAVNLRTLGVTVDECDEGMDITGVERLGGGVAESFGDHRIAMSLSVAGLVSADAVRVNDIDCVSTSFPNFFSLLERFRTGAP.

3-phosphoshikimate is bound by residues Lys-22, Ser-23, and Arg-27. A phosphoenolpyruvate-binding site is contributed by Lys-22. Gly-94 and Arg-122 together coordinate phosphoenolpyruvate. 3-phosphoshikimate-binding residues include Ser-167, Gln-169, Asp-315, and Lys-342. Residue Gln-169 coordinates phosphoenolpyruvate. Residue Asp-315 is the Proton acceptor of the active site. 2 residues coordinate phosphoenolpyruvate: Arg-346 and Arg-388.

It belongs to the EPSP synthase family. As to quaternary structure, monomer.

It localises to the cytoplasm. It carries out the reaction 3-phosphoshikimate + phosphoenolpyruvate = 5-O-(1-carboxyvinyl)-3-phosphoshikimate + phosphate. It functions in the pathway metabolic intermediate biosynthesis; chorismate biosynthesis; chorismate from D-erythrose 4-phosphate and phosphoenolpyruvate: step 6/7. In terms of biological role, catalyzes the transfer of the enolpyruvyl moiety of phosphoenolpyruvate (PEP) to the 5-hydroxyl of shikimate-3-phosphate (S3P) to produce enolpyruvyl shikimate-3-phosphate and inorganic phosphate. This is 3-phosphoshikimate 1-carboxyvinyltransferase from Pelobacter propionicus (strain DSM 2379 / NBRC 103807 / OttBd1).